A 245-amino-acid polypeptide reads, in one-letter code: Ribosomal RNA small subunit methyltransferase G (245 aa).

Residues G90, L95, 140–141 (AE), and R158 contribute to the S-adenosyl-L-methionine site.

This sequence belongs to the methyltransferase superfamily. RNA methyltransferase RsmG family.

The protein resides in the cytoplasm. In terms of biological role, specifically methylates the N7 position of guanine in position 518 of 16S rRNA. The chain is Ribosomal RNA small subunit methyltransferase G from Mycobacterium leprae (strain TN).